A 404-amino-acid polypeptide reads, in one-letter code: Cysteine desulfurase IscS (404 aa).

Pyridoxal 5'-phosphate-binding positions include 75 to 76, N155, Q183, and 203 to 205; these read AT and SAH. K206 is modified (N6-(pyridoxal phosphate)lysine). T243 provides a ligand contact to pyridoxal 5'-phosphate. Residue C328 is the Cysteine persulfide intermediate of the active site. A [2Fe-2S] cluster-binding site is contributed by C328.

This sequence belongs to the class-V pyridoxal-phosphate-dependent aminotransferase family. NifS/IscS subfamily. As to quaternary structure, homodimer. Forms a heterotetramer with IscU, interacts with other sulfur acceptors. It depends on pyridoxal 5'-phosphate as a cofactor.

Its subcellular location is the cytoplasm. It catalyses the reaction (sulfur carrier)-H + L-cysteine = (sulfur carrier)-SH + L-alanine. Its pathway is cofactor biosynthesis; iron-sulfur cluster biosynthesis. Functionally, master enzyme that delivers sulfur to a number of partners involved in Fe-S cluster assembly, tRNA modification or cofactor biosynthesis. Catalyzes the removal of elemental sulfur atoms from cysteine to produce alanine. Functions as a sulfur delivery protein for Fe-S cluster synthesis onto IscU, an Fe-S scaffold assembly protein, as well as other S acceptor proteins. This Vibrio atlanticus (strain LGP32) (Vibrio splendidus (strain Mel32)) protein is Cysteine desulfurase IscS.